Here is a 494-residue protein sequence, read N- to C-terminus: Chromosomal replication initiator protein DnaA (494 aa).

Residues Met-1–Met-103 form a domain I, interacts with DnaA modulators region. The domain II stretch occupies residues Met-103–Ser-148. The interval Pro-149–Gln-371 is domain III, AAA+ region. ATP-binding residues include Gly-195, Gly-197, Lys-198, and Thr-199. A domain IV, binds dsDNA region spans residues Ser-372 to Ala-494.

This sequence belongs to the DnaA family. In terms of assembly, oligomerizes as a right-handed, spiral filament on DNA at oriC.

The protein localises to the cytoplasm. In terms of biological role, plays an essential role in the initiation and regulation of chromosomal replication. ATP-DnaA binds to the origin of replication (oriC) to initiate formation of the DNA replication initiation complex once per cell cycle. Binds the DnaA box (a 9 base pair repeat at the origin) and separates the double-stranded (ds)DNA. Forms a right-handed helical filament on oriC DNA; dsDNA binds to the exterior of the filament while single-stranded (ss)DNA is stabiized in the filament's interior. The ATP-DnaA-oriC complex binds and stabilizes one strand of the AT-rich DNA unwinding element (DUE), permitting loading of DNA polymerase. After initiation quickly degrades to an ADP-DnaA complex that is not apt for DNA replication. Binds acidic phospholipids. This is Chromosomal replication initiator protein DnaA from Bartonella quintana (strain Toulouse) (Rochalimaea quintana).